The chain runs to 597 residues: ATP-dependent lipid A-core flippase (597 aa).

Helical transmembrane passes span W26–A46, I65–I85, I144–L164, G166–V186, A250–L270, and M276–L296. One can recognise an ABC transmembrane type-1 domain in the interval A29–R311. The 237-residue stretch at I343 to L579 folds into the ABC transporter domain. Residue G377 to S384 coordinates ATP.

This sequence belongs to the ABC transporter superfamily. Lipid exporter (TC 3.A.1.106) family. Homodimer.

It is found in the cell inner membrane. It catalyses the reaction ATP + H2O + lipid A-core oligosaccharideSide 1 = ADP + phosphate + lipid A-core oligosaccharideSide 2.. Involved in lipopolysaccharide (LPS) biosynthesis. Translocates lipid A-core from the inner to the outer leaflet of the inner membrane. Transmembrane domains (TMD) form a pore in the inner membrane and the ATP-binding domain (NBD) is responsible for energy generation. This Nitrosococcus oceani (strain ATCC 19707 / BCRC 17464 / JCM 30415 / NCIMB 11848 / C-107) protein is ATP-dependent lipid A-core flippase.